The sequence spans 606 residues: Prostaglandin G/H synthase 1 (606 aa).

The first 30 residues, 1 to 30 (MSRSSPSLRLPVLLLLLLLLLLPPPPPVLP), serve as a signal peptide directing secretion. One can recognise an EGF-like domain in the interval 38 to 76 (PVNPCCYFPCQHQGVCVRVALDRYQCDCTRTGYSGPNCT). Cystine bridges form between Cys42/Cys53, Cys43/Cys165, Cys47/Cys63, and Cys65/Cys75. 3 N-linked (GlcNAc...) asparagine glycosylation sites follow: Asn74, Asn110, and Asn150. His213 serves as the catalytic Proton acceptor. Tyr391 acts as the For cyclooxygenase activity in catalysis. His394 serves as a coordination point for heme b. A glycan (N-linked (GlcNAc...) asparagine) is linked at Asn416. A disulfide bond links Cys575 and Cys581.

It belongs to the prostaglandin G/H synthase family. As to quaternary structure, homodimer. It depends on heme b as a cofactor.

It localises to the microsome membrane. Its subcellular location is the endoplasmic reticulum membrane. It catalyses the reaction (5Z,8Z,11Z,14Z)-eicosatetraenoate + AH2 + 2 O2 = prostaglandin H2 + A + H2O. The enzyme catalyses (5Z,8Z,11Z,14Z)-eicosatetraenoate + 2 O2 = prostaglandin G2. The catalysed reaction is prostaglandin G2 + AH2 = prostaglandin H2 + A + H2O. It carries out the reaction (9Z,12Z)-octadecadienoate + AH2 + O2 = (9R)-hydroxy-(10E,12Z)-octadecadienoate + A + H2O. It catalyses the reaction (9Z,12Z)-octadecadienoate + AH2 + O2 = (9S)-hydroxy-(10E,12Z)-octadecadienoate + A + H2O. The enzyme catalyses (9Z,12Z)-octadecadienoate + AH2 + O2 = (13S)-hydroxy-(9Z,11E)-octadecadienoate + A + H2O. The catalysed reaction is (9Z,12Z)-octadecadienoate + AH2 + O2 = (13R)-hydroxy-(9Z,11E)-octadecadienoate + A + H2O. The protein operates within lipid metabolism; prostaglandin biosynthesis. Its activity is regulated as follows. The cyclooxygenase activity is inhibited by nonsteroidal anti-inflammatory drugs (NSAIDs) including ibuprofen, flurbiprofen, ketoprofen, naproxen, flurbiprofen, anirolac, fenclofenac and diclofenac. Functionally, dual cyclooxygenase and peroxidase that plays an important role in the biosynthesis pathway of prostanoids, a class of C20 oxylipins mainly derived from arachidonate ((5Z,8Z,11Z,14Z)-eicosatetraenoate, AA, C20:4(n-6)), with a particular role in the inflammatory response. The cyclooxygenase activity oxygenates AA to the hydroperoxy endoperoxide prostaglandin G2 (PGG2), and the peroxidase activity reduces PGG2 to the hydroxy endoperoxide prostaglandin H2 (PGH2), the precursor of all 2-series prostaglandins and thromboxanes. This complex transformation is initiated by abstraction of hydrogen at carbon 13 (with S-stereochemistry), followed by insertion of molecular O2 to form the endoperoxide bridge between carbon 9 and 11 that defines prostaglandins. The insertion of a second molecule of O2 (bis-oxygenase activity) yields a hydroperoxy group in PGG2 that is then reduced to PGH2 by two electrons. Involved in the constitutive production of prostanoids in particular in the stomach and platelets. In gastric epithelial cells, it is a key step in the generation of prostaglandins, such as prostaglandin E2 (PGE2), which plays an important role in cytoprotection. In platelets, it is involved in the generation of thromboxane A2 (TXA2), which promotes platelet activation and aggregation, vasoconstriction and proliferation of vascular smooth muscle cells. Can also use linoleate (LA, (9Z,12Z)-octadecadienoate, C18:2(n-6)) as substrate and produce hydroxyoctadecadienoates (HODEs) in a regio- and stereospecific manner, being (9R)-HODE ((9R)-hydroxy-(10E,12Z)-octadecadienoate) and (13S)-HODE ((13S)-hydroxy-(9Z,11E)-octadecadienoate) its major products. The polypeptide is Prostaglandin G/H synthase 1 (PTGS1) (Oryctolagus cuniculus (Rabbit)).